A 273-amino-acid chain; its full sequence is Putative phosphoenolpyruvate synthase regulatory protein (273 aa).

153 to 160 (AVSRAGKT) is an ADP binding site.

This sequence belongs to the pyruvate, phosphate/water dikinase regulatory protein family. PSRP subfamily.

The enzyme catalyses [pyruvate, water dikinase] + ADP = [pyruvate, water dikinase]-phosphate + AMP + H(+). It carries out the reaction [pyruvate, water dikinase]-phosphate + phosphate + H(+) = [pyruvate, water dikinase] + diphosphate. Functionally, bifunctional serine/threonine kinase and phosphorylase involved in the regulation of the phosphoenolpyruvate synthase (PEPS) by catalyzing its phosphorylation/dephosphorylation. The protein is Putative phosphoenolpyruvate synthase regulatory protein of Xanthomonas axonopodis pv. citri (strain 306).